A 487-amino-acid polypeptide reads, in one-letter code: MSIRFPEIPGTTRAPGTSLSSRGIFPTSPGVPQIPTTPNSYSALLHPHKSEAKGKHPLSFSSSMTKRLTPQEKKARRPTSRACVFCHSKHLQCSHSRPCQNCIKRNLAHECRDVVRKRAKYMSTTEVPAVSGESSSESGRATGENGSEMGNPPDPQIAYLDGVFERSSIHESLQDSPMSTPASNFNSNFLNQEYMMLGDLISKPSSPSLDVPMMYAENPSRPFISLGQSDERPKSPEFNNFDFSSLDKAQYVSPLVSHHIYQNVQDIYANKVIDFDYPSSYHSLTSFLRQRFSFTGKSLSDSEKAKKRENLLMILRLIASYRPTFISTHKALFRPFDFQFLEMSFQRCLLDYENLSRLNASPTIIWRRTGEIVSMSNDLVALLGLNISTILSKRTFILELMYDDESIVEYFRLFESVAVGNLHSTIVTRCKLIKRPSEGIETNTSMDSDYIEFCSVWTVKRDLFDLPMMVVGQFLPVLPTPDGFRTY.

The tract at residues 1–75 is disordered; it reads MSIRFPEIPG…KRLTPQEKKA (75 aa). The span at 59–68 shows a compositional bias: polar residues; sequence SFSSSMTKRL. Residues 83–111 constitute a DNA-binding region (zn(2)-C6 fungal-type); sequence CVFCHSKHLQCSHSRPCQNCIKRNLAHEC. Residues 122 to 139 are compositionally biased toward polar residues; it reads MSTTEVPAVSGESSSESG. Positions 122–158 are disordered; that stretch reads MSTTEVPAVSGESSSESGRATGENGSEMGNPPDPQIA. The 73-residue stretch at 348-420 folds into the PAS domain; sequence CLLDYENLSR…FRLFESVAVG (73 aa).

Belongs to the ERT1/acuK family.

It localises to the nucleus. Its function is as follows. Transcription factor which regulates nonfermentable carbon utilization. The chain is Glucose starvation modulator protein 1 (GSM1) from Clavispora lusitaniae (strain ATCC 42720) (Yeast).